Consider the following 211-residue polypeptide: Ubiquitin-conjugating enzyme E2 S-C (211 aa).

Positions 11 to 157 (HIIRRVYKEV…AKLMTEIHAQ (147 aa)) constitute a UBC core domain. Catalysis depends on Cys95, which acts as the Glycyl thioester intermediate. A disordered region spans residues 158-211 (GSTLRGKDPTDPCSSASATVVSGDGPMAKKHAGDRDKKLAAKKKTDKKRALRRL). The span at 197-211 (AAKKKTDKKRALRRL) shows a compositional bias: basic residues.

Belongs to the ubiquitin-conjugating enzyme family.

The enzyme catalyses S-ubiquitinyl-[E1 ubiquitin-activating enzyme]-L-cysteine + [E2 ubiquitin-conjugating enzyme]-L-cysteine = [E1 ubiquitin-activating enzyme]-L-cysteine + S-ubiquitinyl-[E2 ubiquitin-conjugating enzyme]-L-cysteine.. It participates in protein modification; protein ubiquitination. Its function is as follows. Catalyzes the covalent attachment of ubiquitin to other proteins. Acts as an essential factor of the anaphase promoting complex/cyclosome (APC/C), a cell cycle-regulated ubiquitin ligase that controls progression through mitosis. Acts by specifically elongating 'Lys-11'-linked polyubiquitin chains initiated by the E2 enzyme ube2c/ubch10 on APC/C substrates, enhancing the degradation of APC/C substrates by the proteasome and promoting mitotic exit. In Xenopus laevis (African clawed frog), this protein is Ubiquitin-conjugating enzyme E2 S-C (ube2s-c).